The following is a 400-amino-acid chain: MIIKPKIRGFICTTTHPVGCEANVQEQITLTKAKGKIANGPKKVLVVGSSSGYGLSSRIAAAFGSDAATIGVFFEKPGTETKPGTAGWYNSAAFDKFAKAEGLYSKSINCDAFSHEAKQKVIELIKQDLGEIDMVVYSLASPVRKLPDSGELIRSALKPIGETYTATAVDTNKDCIIEATVEPATEQEIADTVTVMGGEDWELWIKALSEAGVLADNCKTVAYSYIGTELTWPIYWHGALGKAKMDLDRAAKALNEQLSATGGSANVAVLKSVVTQASSAIPVMPLYIAMVFKKMRQEGLHEGCMEQIYRMFSERLFRADGAKPETDSDNRIRLDDWELREDIQQHCRNLWPQVTTENLSELTDYREYKAEFIKLFGFGIEGIDYDADVNPYVEFDVIEL.

Residues 48–53 (GSSSGY), 74–75 (FE), 111–112 (DA), and 139–140 (LA) contribute to the NAD(+) site. A substrate-binding site is contributed by Tyr225. The Proton donor role is filled by Tyr235. Residues Lys244 and 273–275 (VVT) each bind NAD(+).

The protein belongs to the TER reductase family. Monomer.

It catalyses the reaction a 2,3-saturated acyl-[ACP] + NAD(+) = a (2E)-enoyl-[ACP] + NADH + H(+). The protein operates within lipid metabolism; fatty acid biosynthesis. Functionally, involved in the final reduction of the elongation cycle of fatty acid synthesis (FAS II). Catalyzes the reduction of a carbon-carbon double bond in an enoyl moiety that is covalently linked to an acyl carrier protein (ACP). This Shewanella baltica (strain OS223) protein is Enoyl-[acyl-carrier-protein] reductase [NADH].